The sequence spans 346 residues: Anthocyanidin 3-O-glucosyltransferase 2 (346 aa).

UDP-alpha-D-glucose is bound by residues A221, Q223, H238, W241, N242, S243, and E246. A261 lines the an anthocyanidin pocket. Residues E262 and Q263 each coordinate UDP-alpha-D-glucose.

Belongs to the UDP-glycosyltransferase family. Expressed in cotyledons, roots and leaves.

It carries out the reaction an anthocyanidin + UDP-alpha-D-glucose + H(+) = an anthocyanidin 3-O-beta-D-glucoside + UDP. It functions in the pathway pigment biosynthesis; anthocyanin biosynthesis. Functionally, in the presence of other necessary color factors, this glycosylation reaction allows the accumulation of anthocyanin pigments. This chain is Anthocyanidin 3-O-glucosyltransferase 2 (GT2), found in Manihot esculenta (Cassava).